The following is a 350-amino-acid chain: DNA polymerase IV (350 aa).

The region spanning 4-185 is the UmuC domain; it reads IIHIDMDCFY…LPLGKLPGIG (182 aa). Residues aspartate 8 and aspartate 103 each contribute to the Mg(2+) site. Glutamate 104 is a catalytic residue.

Belongs to the DNA polymerase type-Y family. In terms of assembly, monomer. Mg(2+) is required as a cofactor.

It localises to the cytoplasm. The enzyme catalyses DNA(n) + a 2'-deoxyribonucleoside 5'-triphosphate = DNA(n+1) + diphosphate. In terms of biological role, poorly processive, error-prone DNA polymerase involved in untargeted mutagenesis. Copies undamaged DNA at stalled replication forks, which arise in vivo from mismatched or misaligned primer ends. These misaligned primers can be extended by PolIV. Exhibits no 3'-5' exonuclease (proofreading) activity. May be involved in translesional synthesis, in conjunction with the beta clamp from PolIII. The chain is DNA polymerase IV from Aeromonas hydrophila subsp. hydrophila (strain ATCC 7966 / DSM 30187 / BCRC 13018 / CCUG 14551 / JCM 1027 / KCTC 2358 / NCIMB 9240 / NCTC 8049).